The following is a 1006-amino-acid chain: SAC3 family protein A (1006 aa).

Disordered stretches follow at residues 1 to 75 (MNHG…GPAT), 106 to 162 (TPYQ…PGSY), 183 to 239 (GYQS…TIAT), 266 to 326 (GTEK…AVST), 516 to 550 (TVTT…RWEP), 595 to 638 (GFKP…SDKD), and 650 to 690 (AGSA…GNLH). Polar residues-rich tracts occupy residues 26 to 75 (GSQT…GPAT) and 106 to 115 (TPYQTSSDPH). Over residues 116–140 (NYSNTGYSNYYSGYQQQPSQSYPQP) the composition is skewed to low complexity. The span at 144–162 (YQNTGAPQPLSSFQNPGSY) shows a compositional bias: polar residues. 2 stretches are compositionally biased toward polar residues: residues 269-282 (KLST…SQSF) and 313-326 (SHPP…AVST). The span at 516–539 (TVTTTNVTNSESSSAQLSSLQNKS) shows a compositional bias: low complexity. The span at 609 to 618 (SFQRPVKRQR) shows a compositional bias: basic residues. Over residues 653–680 (AEEKKRRDSRSKRFEKIQGHSRGNDLTK) the composition is skewed to basic and acidic residues. The PCI domain occupies 804–978 (DLPEYNQCLS…DMLLDTKATS (175 aa)).

The protein belongs to the SAC3 family. As to quaternary structure, interacts with EER5, SAC3B and CML20.

Its subcellular location is the nucleus. Functionally, component of the TREX-2 complex (transcription and export complex 2), a muliprotein complex that functions in docking export-competent ribonucleoprotein particles (mRNPs) to the nuclear entrance of the nuclear pore complex (nuclear basket). TREX-2 participates in mRNA export and accurate chromatin positioning in the nucleus by tethering genes to the nuclear periphery. The chain is SAC3 family protein A from Arabidopsis thaliana (Mouse-ear cress).